The sequence spans 112 residues: HTH-type transcriptional regulator YodB (112 aa).

An HTH hxlR-type domain is found at 6–105; sequence CPKMESAFSL…WADQFCEPGD (100 aa).

In terms of biological role, negatively regulates yodC and azoR1 which may contribute to the degradation of aromatic compounds. Probably positively regulates the catechol-specific transcription of mhqNOP, mhqED, and mhqA. The sequence is that of HTH-type transcriptional regulator YodB (yodB) from Bacillus subtilis (strain 168).